A 241-amino-acid chain; its full sequence is 1-(5-phosphoribosyl)-5-[(5-phosphoribosylamino)methylideneamino] imidazole-4-carboxamide isomerase (241 aa).

The Proton acceptor role is filled by aspartate 10. The Proton donor role is filled by aspartate 129.

This sequence belongs to the HisA/HisF family.

Its subcellular location is the cytoplasm. It carries out the reaction 1-(5-phospho-beta-D-ribosyl)-5-[(5-phospho-beta-D-ribosylamino)methylideneamino]imidazole-4-carboxamide = 5-[(5-phospho-1-deoxy-D-ribulos-1-ylimino)methylamino]-1-(5-phospho-beta-D-ribosyl)imidazole-4-carboxamide. It participates in amino-acid biosynthesis; L-histidine biosynthesis; L-histidine from 5-phospho-alpha-D-ribose 1-diphosphate: step 4/9. The chain is 1-(5-phosphoribosyl)-5-[(5-phosphoribosylamino)methylideneamino] imidazole-4-carboxamide isomerase from Salinispora tropica (strain ATCC BAA-916 / DSM 44818 / JCM 13857 / NBRC 105044 / CNB-440).